The sequence spans 434 residues: Glutamyl-tRNA reductase (434 aa).

Residues 49 to 52 (TCNR), serine 109, 114 to 116 (EPQ), and glutamine 120 contribute to the substrate site. Cysteine 50 serves as the catalytic Nucleophile. 189–194 (GAGEMA) provides a ligand contact to NADP(+).

This sequence belongs to the glutamyl-tRNA reductase family. In terms of assembly, homodimer.

The catalysed reaction is (S)-4-amino-5-oxopentanoate + tRNA(Glu) + NADP(+) = L-glutamyl-tRNA(Glu) + NADPH + H(+). It functions in the pathway porphyrin-containing compound metabolism; protoporphyrin-IX biosynthesis; 5-aminolevulinate from L-glutamyl-tRNA(Glu): step 1/2. Catalyzes the NADPH-dependent reduction of glutamyl-tRNA(Glu) to glutamate 1-semialdehyde (GSA). This is Glutamyl-tRNA reductase from Desulfatibacillum aliphaticivorans.